Here is a 398-residue protein sequence, read N- to C-terminus: MSQNVYIVSTARTPIGSFQGSLSSKTAVELGAAALKGALAKVPELDASKDFDEIIFGNVLSANLGQAPARQVALTAGLGNHIVATTVNKVCASAMKAIILGAQSIKCGNADVVVAGGCESMTNAPYYMPAARGGAKFGQTVLIDGVERDGLNDAYDGLAMGVHAEKCARDWDITRDQQDSFAIESYQKSQQSQKEGKFDNEIVPVTIKGFRGKPDTQVTNDEEPARLHVEKLKSARTVFQRENGTVTAANASPINDGAAAIILVSERVLKEKNLKPLAIVKGWGEAAHLPADFTWAPSLAVPKALKHAGIEDINSVDYFEFNEAFSVVGLVNTKILKLDPSKVNVYGGAVALGHPLGCSGARVVVTLLSILQQEGGKIGVAAICNGGGGASSVVIEKL.

Position 2 is an N-acetylserine (Ser2). The active-site Acyl-thioester intermediate is Cys91. CoA is bound by residues Tyr186 and Lys231. Position 186 (Tyr186) interacts with K(+). Residues Ala248, Ala249, and Ala251 each coordinate K(+). Position 252 (Ser252) interacts with CoA. Val350 contacts K(+). Residues His354 and Cys384 each act as proton acceptor in the active site.

This sequence belongs to the thiolase-like superfamily. Thiolase family. As to quaternary structure, homotetramer.

The protein localises to the cytoplasm. It catalyses the reaction 2 acetyl-CoA = acetoacetyl-CoA + CoA. It functions in the pathway metabolic intermediate biosynthesis; (R)-mevalonate biosynthesis; (R)-mevalonate from acetyl-CoA: step 1/3. Its function is as follows. Acetyl-CoA acetyltransferase; part of the first module of ergosterol biosynthesis pathway that includes the early steps of the pathway, conserved across all eukaryotes, and which results in the formation of mevalonate from acetyl-coenzyme A (acetyl-CoA). In this module, the acetyl-CoA acetyltransferase ERG10 catalyzes the formation of acetoacetyl-CoA. The hydroxymethylglutaryl-CoA synthase ERG13 then condenses acetyl-CoA with acetoacetyl-CoA to form HMG-CoA. The rate-limiting step of the early module is the reduction to mevalonate by the 3-hydroxy-3-methylglutaryl-coenzyme A (HMG-CoA) reductases HMG1 and HMG2 which are derived from a single ancestral HMGR gene by gene duplication. The chain is Acetyl-CoA acetyltransferase from Saccharomyces pastorianus (strain ATCC 76670 / Carlsberg bottom yeast no.2 / CBS 1503 / CLIB 180 / NBRC 10610 / NRRL Y-1525) (Saaz-type lager yeast).